We begin with the raw amino-acid sequence, 340 residues long: MAPSLEEPTQIDFNAPLKAAPKLVAPEPEHCPGPESQQAGTADNCAGCPNQAICASAPKGPDPDIPLITARLSSVKHKILVLSGKGGVGKSTFSTMLSHGFSANPDSTVGLMDTDICGPSIPKMMGVEEETIHTTADGWEPVWVSENLGVMSVQFMLPNRDDAVIWRGPKKNGLIKKFLMDVKWGELDFLIVDTPPGTSDEHLSVNSFLKASGVDGAVLVTTPQEVALLDVRKEIDFCRKASIPILGIVENMSGFVCPGCKHESQIFRASTGGARKLAKEENIPFLGAVPLDPRIGMACDYGESFLTAYPDSPACAAIRDVVRRVGVEMGLEADEVLPEE.

[4Fe-4S] cluster-binding residues include C31, C45, C48, and C54. 84–91 (GKGGVGKS) lines the ATP pocket. Residues C257 and C260 each contribute to the [4Fe-4S] cluster site.

Belongs to the Mrp/NBP35 ATP-binding proteins family. NUBP1/NBP35 subfamily. As to quaternary structure, heterotetramer of 2 NBP35 and 2 CFD1 chains. The cofactor is [4Fe-4S] cluster.

It localises to the cytoplasm. Functionally, component of the cytosolic iron-sulfur (Fe/S) protein assembly (CIA) machinery. Required for maturation of extramitochondrial Fe-S proteins. The NBP35-CFD1 heterotetramer forms a Fe-S scaffold complex, mediating the de novo assembly of an Fe-S cluster and its transfer to target apoproteins. This chain is Cytosolic Fe-S cluster assembly factor NBP35, found in Phaeosphaeria nodorum (strain SN15 / ATCC MYA-4574 / FGSC 10173) (Glume blotch fungus).